Here is a 130-residue protein sequence, read N- to C-terminus: Small ribosomal subunit protein uS9 (130 aa).

It belongs to the universal ribosomal protein uS9 family.

This chain is Small ribosomal subunit protein uS9, found in Pseudomonas aeruginosa (strain LESB58).